Here is a 144-residue protein sequence, read N- to C-terminus: 6-pyruvoyl tetrahydrobiopterin synthase (144 aa).

Serine 18 is subject to Phosphoserine. Zn(2+) is bound at residue histidine 23. Serine 27 carries the post-translational modification Phosphoserine. Cysteine 42 acts as the Proton acceptor in catalysis. Zn(2+) contacts are provided by histidine 48 and histidine 50. Catalysis depends on histidine 89, which acts as the Charge relay system. Tyrosine 127 is modified (phosphotyrosine). Glutamate 133 serves as the catalytic Charge relay system.

This sequence belongs to the PTPS family. Homodimer. Homohexamer formed of two homotrimers in a head to head fashion. Requires Zn(2+) as cofactor. Post-translationally, phosphorylation of Ser-18 is required for maximal enzyme activity.

The catalysed reaction is 7,8-dihydroneopterin 3'-triphosphate = 6-pyruvoyl-5,6,7,8-tetrahydropterin + triphosphate + H(+). It functions in the pathway cofactor biosynthesis; tetrahydrobiopterin biosynthesis; tetrahydrobiopterin from 7,8-dihydroneopterin triphosphate: step 1/3. Functionally, involved in the biosynthesis of tetrahydrobiopterin, an essential cofactor of aromatic amino acid hydroxylases. Catalyzes the transformation of 7,8-dihydroneopterin triphosphate into 6-pyruvoyl tetrahydropterin. This is 6-pyruvoyl tetrahydrobiopterin synthase from Mus musculus (Mouse).